A 634-amino-acid polypeptide reads, in one-letter code: Threonine--tRNA ligase (634 aa).

The region spanning 1 to 61 (MINIRFPDGS…NSNCELRLIT (61 aa)) is the TGS domain. The segment at 241-532 (DHRKIGKVLD…LIEHYAGNLP (292 aa)) is catalytic. Positions 332, 383, and 509 each coordinate Zn(2+).

The protein belongs to the class-II aminoacyl-tRNA synthetase family. As to quaternary structure, homodimer. Requires Zn(2+) as cofactor.

It localises to the cytoplasm. The catalysed reaction is tRNA(Thr) + L-threonine + ATP = L-threonyl-tRNA(Thr) + AMP + diphosphate + H(+). Its function is as follows. Catalyzes the attachment of threonine to tRNA(Thr) in a two-step reaction: L-threonine is first activated by ATP to form Thr-AMP and then transferred to the acceptor end of tRNA(Thr). Also edits incorrectly charged L-seryl-tRNA(Thr). The protein is Threonine--tRNA ligase of Francisella tularensis subsp. holarctica (strain OSU18).